An 805-amino-acid chain; its full sequence is RFX-like transcription factor daf-19 (805 aa).

Residues 1 to 14 are compositionally biased toward polar residues; that stretch reads MTNEEPVPSTSSVL. Residues 1-113 are disordered; sequence MTNEEPVPST…TPRKKMEPED (113 aa). The span at 19–92 shows a compositional bias: basic and acidic residues; the sequence is KNVKIETPSR…DSKSLSKETH (74 aa). The segment covering 93–104 has biased composition (polar residues); sequence NTISTRSSSSGT. A DNA-binding region (RFX-type winged-helix) is located at residues 260 to 334; the sequence is TVNWLFENYE…YHYYGIRLKD (75 aa).

Belongs to the RFX family. In terms of tissue distribution, ciliated sensory neurons. Expressed in the male tail HOB and RnB neurons but not in male-specific CEM head neurons or other ciliated neurons.

The protein localises to the nucleus. Functionally, probable transcription factor. May regulate some genes of ciliated sensory neurons. May activate the expression of the shared components of sensory cilia, but not the cell-type-specific expression. Together with transcription factor atf-7, involved in regulation of the serotonergic response of ADF neurons to pathogenic food. In terms of biological role, involved in male mating behavior; may play a role in functional specialization of PKD ciliated sensory neurons. The chain is RFX-like transcription factor daf-19 from Caenorhabditis elegans.